The primary structure comprises 193 residues: Thymidine kinase (193 aa).

Residues 9 to 16 (SAMNAGKS) and 87 to 90 (DEAQ) each bind ATP. The active-site Proton acceptor is E88. Zn(2+) is bound by residues C145, C147, C182, and H185.

The protein belongs to the thymidine kinase family. Homotetramer.

The protein resides in the cytoplasm. The catalysed reaction is thymidine + ATP = dTMP + ADP + H(+). In Idiomarina loihiensis (strain ATCC BAA-735 / DSM 15497 / L2-TR), this protein is Thymidine kinase.